The sequence spans 963 residues: VPS35 endosomal protein-sorting factor-like (963 aa).

The tract at residues 43–112 (SKTKKVSRKG…DKDENSFVGP (70 aa)) is disordered. Residues 51 to 72 (KGSTSSTSSSSSSSVIDPLSSV) are compositionally biased toward low complexity. The residue at position 265 (Ser-265) is a Phosphoserine. A helical transmembrane segment spans residues 699 to 719 (AFVRACVAYCFITIPSLVGIF).

The protein belongs to the VPS35L family. In terms of assembly, component of the heterotrimeric retriever complex formed by VPS26C, VPS29 and VPS35L. Interacts with VPS29. Interacts with COMMD1, CCDC93 and CCDC22; associates with the CCC (COMMD/CCDC22/CCDC93) complex which contains at least COMMD1 (and possibly other COMM domain-containing proteins), CCDC22 and CCDC93. Interacts with WASHC1, WASHC2A and WASHC2C. Interacts with SNX17 and SNX31.

It localises to the membrane. It is found in the endosome. Acts as a component of the retriever complex. The retriever complex is a heterotrimeric complex related to retromer cargo-selective complex (CSC) and essential for retromer-independent retrieval and recycling of numerous cargos such as integrin alpha-5/beta-1 (ITGA5:ITGB1). The recruitment of the retriever complex to the endosomal membrane involves CCC and WASH complexes. In the endosomes, drives the retrieval and recycling of NxxY-motif-containing cargo proteins by coupling to SNX17, a cargo essential for the homeostatic maintenance of numerous cell surface proteins associated with processes that include cell migration, cell adhesion, nutrient supply and cell signaling. Involved in copper-dependent ATP7A trafficking between the trans-Golgi network and vesicles in the cell periphery; the function is proposed to depend on its association with the CCC complex and cooperation with the WASH complex on early endosomes. Seems not to be required for CCC complex stability. This chain is VPS35 endosomal protein-sorting factor-like, found in Mus musculus (Mouse).